The chain runs to 579 residues: Rhoptry surface protein CERLI2 (579 aa).

Residues 52–84 (LHNYRTFYLLIKINEIFNINKYKQIYIIVNTDK) form the C2 domain. 11 consecutive repeat copies span residues 442–451 (QTDEIKNDNI), 452–461 (QTDEIKNDHI), 462–471 (QTDEIKNDNI), 472–481 (QTDEIKNDNI), 482–491 (QTDEIKNDHI), 492–501 (QTDEIKNDNI), 502–511 (QTDEIKNDNI), 522–531 (QTDEINNDHI), 532–541 (QTDEIKNDHI), 542–551 (QTDEIKNDHI), and 552–561 (QTDEIKNDIN). The tract at residues 442–561 (QTDEIKNDNI…QTDEIKNDIN (120 aa)) is 12 X 10 AA tandem repeat of Q-T-E-I-[K/N]-N-D-[H/N/I][I/N].

The protein localises to the cytoplasmic vesicle. It localises to the secretory vesicle. The protein resides in the rhoptry membrane. It is found in the cell membrane. Its subcellular location is the host cell membrane. In terms of biological role, plays an important role in rhoptry physiology and thus is essential for merozoite invasion of host erythrocytes. The polypeptide is Rhoptry surface protein CERLI2 (Plasmodium falciparum (isolate 3D7)).